The chain runs to 223 residues: Ras-related protein Rab-32 (223 aa).

Position 2 is an N-acetylalanine (alanine 2). 9 residues coordinate GTP: valine 34, glycine 35, lysine 36, threonine 37, serine 38, serine 49, glutamine 50, tyrosine 52, and threonine 55. Threonine 37 lines the Mg(2+) pocket. The short motif at 46–60 (QLFSQHYRATIGVDF) is the Switch 1 element. Threonine 55 provides a ligand contact to Mg(2+). Serine 69 carries the phosphoserine modification. Aspartate 79 is a binding site for Mg(2+). GTP contacts are provided by glycine 82, asparagine 141, lysine 142, aspartate 144, alanine 173, and lysine 174. Positions 82 to 95 (GQERFGNMTRVYYK) match the Switch 2 motif. The segment at 176 to 195 (NINIDEATRFLVENMLANQQ) is PKA-RII subunit binding domain. 2 S-geranylgeranyl cysteine lipidation sites follow: cysteine 222 and cysteine 223.

The protein belongs to the small GTPase superfamily. Rab family. In terms of assembly, interacts with ANKRD27. A decreased interaction with ANKRD27 seen in the presence of SGSM2. Interacts with LRRK2 (via N-terminus); this interaction results in stimulation of RAB10 phosphorylation by LRRK2. Mg(2+) serves as cofactor. As to expression, widely expressed with highest levels in liver. Strong expression also found in melanocyte, platelet, mast cell and fibroblast cell lines.

The protein resides in the mitochondrion. Its subcellular location is the mitochondrion outer membrane. It is found in the cytoplasmic vesicle. The protein localises to the phagosome. It localises to the phagosome membrane. The protein resides in the melanosome. Its subcellular location is the melanosome membrane. The enzyme catalyses GTP + H2O = GDP + phosphate + H(+). Its activity is regulated as follows. Regulated by guanine the nucleotide exchange factor (GEF) BLOC-3 complex composed of HPS1 and HPS4 which promote the exchange of bound GDP for free GTP. Regulated by the GTPase activating protein (GAP) SGSM2/RUTBC1 which increases the GTP hydrolysis activity. Inhibited by GDP dissociation inhibitors (GDIs) which prevent Rab-GDP dissociation. In terms of biological role, the small GTPases Rab are key regulators of intracellular membrane trafficking, from the formation of transport vesicles to their fusion with membranes. Rabs cycle between an inactive GDP-bound form and an active GTP-bound form that is able to recruit to membranes different set of downstream effectors directly responsible for vesicle formation, movement, tethering and fusion. Also acts as an A-kinase anchoring protein by binding to the type II regulatory subunit of protein kinase A and anchoring it to the mitochondrion. Also involved in synchronization of mitochondrial fission. Plays a role in the maturation of phagosomes that engulf pathogens, such as S.aureus and M.tuberculosis. Plays an important role in the control of melanin production and melanosome biogenesis. In concert with RAB38, regulates the proper trafficking of melanogenic enzymes TYR, TYRP1 and DCT/TYRP2 to melanosomes in melanocytes. Stimulates phosphorylation of RAB10 'Thr-73' by LRRK2. This Mus musculus (Mouse) protein is Ras-related protein Rab-32.